A 263-amino-acid polypeptide reads, in one-letter code: Small ribosomal subunit protein uS3 (263 aa).

The 69-residue stretch at 40 to 108 (IRNYLFKKFH…HIKVDVDVLE (69 aa)) folds into the KH type-2 domain. The segment at 224–263 (KPKGSEANHQRRNSNKSKDYRDNKNKQFNKNHQNQQPAKE) is disordered. Basic and acidic residues predominate over residues 239–248 (KSKDYRDNKN). The span at 249–263 (KQFNKNHQNQQPAKE) shows a compositional bias: low complexity.

It belongs to the universal ribosomal protein uS3 family. Part of the 30S ribosomal subunit. Forms a tight complex with proteins S10 and S14.

Its function is as follows. Binds the lower part of the 30S subunit head. Binds mRNA in the 70S ribosome, positioning it for translation. The sequence is that of Small ribosomal subunit protein uS3 from Mycoplasmoides gallisepticum (strain R(low / passage 15 / clone 2)) (Mycoplasma gallisepticum).